The chain runs to 553 residues: 5'-nucleotidase (553 aa).

The signal sequence occupies residues 1-21 (MKQGLILKSVLSAAIIASLAG). A lipid anchor (N-palmitoyl cysteine) is attached at Cys-22. Cys-22 carries S-diacylglycerol cysteine lipidation. Residues Asp-45, His-47, Asp-88, Asn-120, His-221, His-256, and Gln-258 each coordinate a divalent metal cation. Residues Phe-432 and 501-507 (FNAAGGD) each bind substrate.

The protein belongs to the 5'-nucleotidase family. The cofactor is chloride. It depends on Mg(2+) as a cofactor.

Its subcellular location is the cell outer membrane. The enzyme catalyses a ribonucleoside 5'-phosphate + H2O = a ribonucleoside + phosphate. Functionally, degradation of extracellular 5'-nucleotides for nutritional needs. This is 5'-nucleotidase (nutA) from Vibrio cholerae serotype O1 (strain ATCC 39315 / El Tor Inaba N16961).